The primary structure comprises 259 residues: Deoxyribose-phosphate aldolase (259 aa).

The active-site Proton donor/acceptor is the D102. K167 acts as the Schiff-base intermediate with acetaldehyde in catalysis. The active-site Proton donor/acceptor is K201.

Belongs to the DeoC/FbaB aldolase family. DeoC type 2 subfamily.

Its subcellular location is the cytoplasm. The enzyme catalyses 2-deoxy-D-ribose 5-phosphate = D-glyceraldehyde 3-phosphate + acetaldehyde. It participates in carbohydrate degradation; 2-deoxy-D-ribose 1-phosphate degradation; D-glyceraldehyde 3-phosphate and acetaldehyde from 2-deoxy-alpha-D-ribose 1-phosphate: step 2/2. Its function is as follows. Catalyzes a reversible aldol reaction between acetaldehyde and D-glyceraldehyde 3-phosphate to generate 2-deoxy-D-ribose 5-phosphate. This chain is Deoxyribose-phosphate aldolase, found in Escherichia coli (strain SMS-3-5 / SECEC).